Consider the following 169-residue polypeptide: Large ribosomal subunit protein uL15 (169 aa).

The disordered stretch occupies residues 20–56 (GRGIGSGKGKTGGRGVKGQKARSGVSIKGFEGGQMPL). Positions 21-35 (RGIGSGKGKTGGRGV) are enriched in gly residues.

This sequence belongs to the universal ribosomal protein uL15 family. In terms of assembly, part of the 50S ribosomal subunit.

In terms of biological role, binds to the 23S rRNA. This is Large ribosomal subunit protein uL15 from Methylorubrum extorquens (strain CM4 / NCIMB 13688) (Methylobacterium extorquens).